The chain runs to 388 residues: Ovalbumin-related protein Y (388 aa).

C74 and C121 are oxidised to a cystine. N95, N215, N293, and N312 each carry an N-linked (GlcNAc...) asparagine glycan.

The protein belongs to the serpin family. Ov-serpin subfamily. N-glycosylated on at least two Asn residues by ovomucoid type carbohydrate units. In terms of processing, the N-terminus is blocked. As to expression, major protein of egg white. Expressed in the magnum of the oviduct (at protein level).

The protein resides in the secreted. This chain is Ovalbumin-related protein Y (SERPINB14B), found in Gallus gallus (Chicken).